Reading from the N-terminus, the 436-residue chain is Probable transporter MCH1 (436 aa).

7 consecutive transmembrane segments (helical) span residues 27 to 47, 66 to 86, 93 to 113, 119 to 139, 155 to 175, 188 to 208, and 249 to 269; these read VVAF…LLFT, MISS…GYLA, LLSL…SYLV, SVIG…SLYF, LAIS…AQIL, LEVV…ASFV, and FVSF…ILNI. A glycan (N-linked (GlcNAc...) asparagine) is linked at Asn278. A run of 5 helical transmembrane segments spans residues 295–312, 325–345, 347–367, 373–393, and 410–430; these read VSIM…LGVL, LLVV…SAIL, GVSY…IWGI, TWGS…MFYG, and TAGA…IWYA.

The protein belongs to the major facilitator superfamily.

The protein localises to the vacuole membrane. Functionally, probable transporter. This is Probable transporter MCH1 (MCH1) from Candida albicans (strain SC5314 / ATCC MYA-2876) (Yeast).